We begin with the raw amino-acid sequence, 484 residues long: Glucan endo-1,3-beta-glucosidase 5 (484 aa).

The first 26 residues, Met-1–Gly-26, serve as a signal peptide directing secretion. N-linked (GlcNAc...) asparagine glycosylation occurs at Asn-102. Glu-122 (proton donor) is an active-site residue. 2 N-linked (GlcNAc...) asparagine glycosylation sites follow: Asn-129 and Asn-260. Glu-267 acts as the Nucleophile in catalysis. Cys-366 and Cys-428 form a disulfide bridge. Residue Asn-409 is glycosylated (N-linked (GlcNAc...) asparagine). The GPI-anchor amidated alanine moiety is linked to residue Ala-460. Positions Ser-461–Leu-484 are cleaved as a propeptide — removed in mature form.

It belongs to the glycosyl hydrolase 17 family. In terms of processing, contains two additional disulfide bonds.

It is found in the cell membrane. The enzyme catalyses Hydrolysis of (1-&gt;3)-beta-D-glucosidic linkages in (1-&gt;3)-beta-D-glucans.. This chain is Glucan endo-1,3-beta-glucosidase 5, found in Arabidopsis thaliana (Mouse-ear cress).